The chain runs to 357 residues: Cobalt-precorrin-5B C(1)-methyltransferase (357 aa).

This sequence belongs to the CbiD family.

It carries out the reaction Co-precorrin-5B + S-adenosyl-L-methionine = Co-precorrin-6A + S-adenosyl-L-homocysteine. Its pathway is cofactor biosynthesis; adenosylcobalamin biosynthesis; cob(II)yrinate a,c-diamide from sirohydrochlorin (anaerobic route): step 6/10. Catalyzes the methylation of C-1 in cobalt-precorrin-5B to form cobalt-precorrin-6A. This chain is Cobalt-precorrin-5B C(1)-methyltransferase, found in Alkaliphilus oremlandii (strain OhILAs) (Clostridium oremlandii (strain OhILAs)).